The chain runs to 68 residues: Large ribosomal subunit protein bL33c (68 aa).

This sequence belongs to the bacterial ribosomal protein bL33 family.

It is found in the plastid. The protein localises to the chloroplast. The sequence is that of Large ribosomal subunit protein bL33c from Piper cenocladum (Ant piper).